We begin with the raw amino-acid sequence, 374 residues long: Queuine tRNA-ribosyltransferase (374 aa).

Asp-89 (proton acceptor) is an active-site residue. Substrate-binding positions include 89 to 93 (DSGGF), Asp-143, Gln-187, and Gly-214. Positions 245-251 (GVGKPED) are RNA binding. The active-site Nucleophile is the Asp-264. Residues 269–273 (TRNAR) form an RNA binding; important for wobble base 34 recognition region. Zn(2+) is bound by residues Cys-302, Cys-304, Cys-307, and His-333.

Belongs to the queuine tRNA-ribosyltransferase family. In terms of assembly, homodimer. Within each dimer, one monomer is responsible for RNA recognition and catalysis, while the other monomer binds to the replacement base PreQ1. Zn(2+) is required as a cofactor.

It carries out the reaction 7-aminomethyl-7-carbaguanine + guanosine(34) in tRNA = 7-aminomethyl-7-carbaguanosine(34) in tRNA + guanine. The protein operates within tRNA modification; tRNA-queuosine biosynthesis. Catalyzes the base-exchange of a guanine (G) residue with the queuine precursor 7-aminomethyl-7-deazaguanine (PreQ1) at position 34 (anticodon wobble position) in tRNAs with GU(N) anticodons (tRNA-Asp, -Asn, -His and -Tyr). Catalysis occurs through a double-displacement mechanism. The nucleophile active site attacks the C1' of nucleotide 34 to detach the guanine base from the RNA, forming a covalent enzyme-RNA intermediate. The proton acceptor active site deprotonates the incoming PreQ1, allowing a nucleophilic attack on the C1' of the ribose to form the product. After dissociation, two additional enzymatic reactions on the tRNA convert PreQ1 to queuine (Q), resulting in the hypermodified nucleoside queuosine (7-(((4,5-cis-dihydroxy-2-cyclopenten-1-yl)amino)methyl)-7-deazaguanosine). The protein is Queuine tRNA-ribosyltransferase of Shewanella oneidensis (strain ATCC 700550 / JCM 31522 / CIP 106686 / LMG 19005 / NCIMB 14063 / MR-1).